We begin with the raw amino-acid sequence, 323 residues long: Oligodendrocyte transcription factor 2 (323 aa).

Polar residues-rich tracts occupy residues 1–13 (MDSD…SRPS) and 27–45 (KGSS…STPS). The disordered stretch occupies residues 1-107 (MDSDASLVSS…KKQMTEPELQ (107 aa)). Residues 76–93 (KSSSSSTSSSTSSAAASS) are compositionally biased toward low complexity. One can recognise a bHLH domain in the interval 108-162 (QLRLKINSRERKRMHDLNIAMDGLREVMPYAHGPSVRKLSKIATLLLARNYILML).

In terms of assembly, interacts with NKX2-2. Interacts with ZNF488. Expressed in the brain, in oligodendrocytes. Strongly expressed in oligodendrogliomas, while expression is weak to moderate in astrocytomas. Expression in glioblastomas highly variable.

The protein localises to the nucleus. The protein resides in the cytoplasm. Required for oligodendrocyte and motor neuron specification in the spinal cord, as well as for the development of somatic motor neurons in the hindbrain. Functions together with ZNF488 to promote oligodendrocyte differentiation. Cooperates with OLIG1 to establish the pMN domain of the embryonic neural tube. Antagonist of V2 interneuron and of NKX2-2-induced V3 interneuron development. The polypeptide is Oligodendrocyte transcription factor 2 (OLIG2) (Homo sapiens (Human)).